Consider the following 905-residue polypeptide: MGTGSSREQHLNSFNTLQKETVPFSSDLWKTILSQNLEDDSLYLENLKKLKNERPENLATFIKKLVNQLVLVKGLQRETNTPGDFQLTSISLSYLSRILPIVFESGDDFADKVFWLNEGIEPLSHPSAKISTPPSITTTKTTEIIEEQEKKDQENKQVEENKENEEKKDEEKKDEEKKDEEKKDEDKKENKTTTTTTTTNTTNNTNNNNNSDESSFDTTPLAVKLMDSLLDLLFFPGFTVTESLGLKSPKEASPDAIPVLFSWAGGFGVDSVPTVHNKQFWINRLSVLQCLITCLSEQLYVPQDSVSTFKSKWLDWITHTQEYYTEALLFSLINTFATFDPIGWGIPYNHLMYSDDHEICSKLSIQILNVLLTYDPIENNDQQPQQQHHHHQQQHHQQQQQQQQSTIECRNKFIQYIKTLKRVRDFKFFFNAFERIMNVPLIASHTKLPNSTKKIELHQDLTYTMWLFLSYNHDFLRSIVNYENSPEFLIPLLQYMDEGRKSQTTHGIVQIGTFILLLLSGERDFSISLNKPFVGRIHIDIQQPQVYSDFVITVMYRLLVDTPDRLESIYECVLTILSNLSPYMKNLSMVTCVKLMKLFEYLSTPRFLFATNHNYRYVGFLLESLNNLLQHQYESNTRLIYAILRCQNQFSKLAYLKISPVTPSKPMEQITQPSPISTSEEAFGKLNKLSISEEPSTLSNEKSDKTTDGGDHQDESISKSKVQSKPTTEHPNSTGATPSSTNSGTPTIKAFSSTTPNQESPKLGGDGIDSQSSTPNKQQLPPPPPQQTKKTQMVSHFMPTDEWLQDIKKQLPLDNILKVITHLSPQIQGLCTGSGSDEQKIMDYLKMSTIVGIFHNPGPIMTRRYHSNAITKSWFIAYMWCIIYLENHSPPLFLHTNIKLFQVKQ.

Positions 139-191 (TKTTEIIEEQEKKDQENKQVEENKENEEKKDEEKKDEEKKDEEKKDEDKKENK) form a coiled coil. Positions 147–191 (EQEKKDQENKQVEENKENEEKKDEEKKDEEKKDEEKKDEDKKENK) are enriched in basic and acidic residues. 3 disordered regions span residues 147-217 (EQEK…SSFD), 381-404 (DQQPQQQHHHHQQQHHQQQQQQQQ), and 690-793 (SISE…KTQM). Composition is skewed to low complexity over residues 192–210 (TTTTTTTTNTTNNTNNNNN) and 395–404 (HHQQQQQQQQ). Polar residues predominate over residues 690–700 (SISEEPSTLSN). The segment covering 701–718 (EKSDKTTDGGDHQDESIS) has biased composition (basic and acidic residues). The segment covering 719–760 (KSKVQSKPTTEHPNSTGATPSSTNSGTPTIKAFSSTTPNQES) has biased composition (polar residues).

The protein belongs to the hid-1 family.

This chain is Protein HID1 (hid1), found in Dictyostelium discoideum (Social amoeba).